The following is a 172-amino-acid chain: Large ribosomal subunit protein uL10 (172 aa).

Belongs to the universal ribosomal protein uL10 family. In terms of assembly, part of the ribosomal stalk of the 50S ribosomal subunit. The N-terminus interacts with L11 and the large rRNA to form the base of the stalk. The C-terminus forms an elongated spine to which L12 dimers bind in a sequential fashion forming a multimeric L10(L12)X complex.

Forms part of the ribosomal stalk, playing a central role in the interaction of the ribosome with GTP-bound translation factors. The chain is Large ribosomal subunit protein uL10 from Leifsonia xyli subsp. xyli (strain CTCB07).